Reading from the N-terminus, the 689-residue chain is Shutoff protein (689 aa).

The interval 1–24 (MSEEPVSGTTVEIEEDTHTPPNSP) is disordered. The segment at 226–289 (VMNNLLVKRA…SVLVTVVLEC (64 aa)) is binding to host EIF4G. The RRM domain maps to 292-410 (RLFTSKDMVK…PLYTETSQRL (119 aa)). Residues Tyr-309 and Tyr-627 each carry the phosphotyrosine; by host modification. Residues 625-689 (GQYLDPHTGE…GEPDVRGTTS (65 aa)) are disordered. A compositionally biased stretch (basic and acidic residues) spans 645–655 (SGHEFQGDGRH). The span at 656-675 (REPKRGRHFRQRGGPRKPPR) shows a compositional bias: basic residues. Residues 678–689 (AGGEPDVRGTTS) show a composition bias toward basic and acidic residues.

Belongs to the adenoviridae shutoff protein family. Monomer. Interacts with hexon protein; this interaction allows chaperoning and trimerization of hexon proteins. Interacts (via N-terminus) with host initiation factor EIF4G (via C-terminus). Interacts (via RRM domain) with viral mRNAs that contain the tripartite leader; this interaction allows ribosome shunting and expression of viral late mRNAs. Might be cleaved by the viral protease. In terms of processing, phosphorylated. Tyrosine phosphorylation enhances preferential binding to tripartite leader mRNAs and allows ribosome shunting. Post-translationally, methylated. Asymmetric dimethylation by host PRMT1 of the Arg/Gly-rich region may regulate shutoff protein binding to hexon and promote the capsid assembly in the nucleus.

The protein resides in the host cytoplasm. In terms of biological role, protein that inhibits host translation while promoting late viral translation by ribosome shunting. Blocks host cap-dependent translation by binding to eIF4G, displacing MKNK1 from cap initiation complexes and preventing EIF4E phosphorylation. Binds to the tripartite leader sequence of viral late mRNAs and recruits host eIF4G, PABPC1/poly-A binding protein and 40S ribosomes subunits on viral mRNAs, allowing ribosome shunting and efficient translation of late viral mRNAs even though conventional translation via ribosome scanning from the cap has been shut off in the host cell. During assembly, acts as a chaperone protein that helps hexon proteins assembly into trimers. In Canis lupus familiaris (Dog), this protein is Shutoff protein.